Here is a 97-residue protein sequence, read N- to C-terminus: Protein Vpr (97 aa).

Positions 1 to 42 are homooligomerization; that stretch reads MEQAPEDQGPQREPHNEWTLELLEELKREAVRHFPRPWLHGL. Phosphoserine; by host occurs at positions 79, 95, and 97.

Belongs to the HIV-1 VPR protein family. In terms of assembly, homooligomer, may form homodimer. Interacts with p6-gag region of the Pr55 Gag precursor protein through a (Leu-X-X)4 motif near the C-terminus of the P6gag protein. Interacts with host UNG. May interact with host RAD23A/HHR23A. Interacts with host VPRBP/DCAF1, leading to hijack the CUL4A-RBX1-DDB1-DCAF1/VPRBP complex, mediating ubiquitination of host proteins such as TERT and ZGPAT and arrest of the cell cycle in G2 phase. In terms of processing, phosphorylated on several residues by host. These phosphorylations regulate VPR activity for the nuclear import of the HIV-1 pre-integration complex.

Its subcellular location is the virion. It localises to the host nucleus. The protein resides in the host extracellular space. During virus replication, may deplete host UNG protein, and incude G2-M cell cycle arrest. Acts by targeting specific host proteins for degradation by the 26S proteasome, through association with the cellular CUL4A-DDB1 E3 ligase complex by direct interaction with host VPRPB/DCAF-1. Cell cycle arrest reportedly occurs within hours of infection and is not blocked by antiviral agents, suggesting that it is initiated by the VPR carried into the virion. Additionally, VPR induces apoptosis in a cell cycle dependent manner suggesting that these two effects are mechanistically linked. Detected in the serum and cerebrospinal fluid of AIDS patient, VPR may also induce cell death to bystander cells. In terms of biological role, during virus entry, plays a role in the transport of the viral pre-integration (PIC) complex to the host nucleus. This function is crucial for viral infection of non-dividing macrophages. May act directly at the nuclear pore complex, by binding nucleoporins phenylalanine-glycine (FG)-repeat regions. This chain is Protein Vpr, found in Human immunodeficiency virus type 1 group M subtype B (isolate YU-2) (HIV-1).